A 129-amino-acid chain; its full sequence is D-ribose pyranase 1 (129 aa).

The active-site Proton donor is histidine 20. Substrate is bound by residues aspartate 28, histidine 96, and 118–120 (YSN).

It belongs to the RbsD / FucU family. RbsD subfamily. Homodecamer.

The protein localises to the cytoplasm. It catalyses the reaction beta-D-ribopyranose = beta-D-ribofuranose. It participates in carbohydrate metabolism; D-ribose degradation; D-ribose 5-phosphate from beta-D-ribopyranose: step 1/2. Functionally, catalyzes the interconversion of beta-pyran and beta-furan forms of D-ribose. The chain is D-ribose pyranase 1 from Rubrobacter xylanophilus (strain DSM 9941 / JCM 11954 / NBRC 16129 / PRD-1).